We begin with the raw amino-acid sequence, 475 residues long: MQQETGIHPIVQCDPIAAIATPLGVGALAVVRISGATAFDIAGRVFRKARDPHQPLSETPGYTAHFGRLYDGLTLIDEVIALVFRSPSSFTAEDMVEFTCHGGPVVTRHVLQLLLDNGCRLAEPGEFTRRAFLNGKIDLLQAEAIGEMIHARSESAYRTAVIQMKGDLSATLGALREKLLRSCALLELELDFSEEDVEFQSREELRVEIASLQSEVARLVDSYQHGRLLTEGVATVIAGRPNAGKSTLLNTLLGEERAIVSHMPGTTRDYIEECFIHDKTMFRLTDTAGLRETGEEIEHEGVRRSRMKMAEADLLLYLLDLSREGMAEEIKEIVALKAAHASSKFLVVANKIDLVPDATTLLCRLGEEAGCEAIGISARQKLGIDELKSRMSSMVEGLDKLHEASVLVTSLRHYEALRNAGDALRNAQNLLDEQADTELIAFELRAALDYVGEITGKVVNEEILHAIFERFCIGK.

Positions 32, 97, and 136 each coordinate (6S)-5-formyl-5,6,7,8-tetrahydrofolate. The TrmE-type G domain occupies 232-396; it reads GVATVIAGRP…LKSRMSSMVE (165 aa). Residues 242-247, 261-267, 286-289, and 377-379 contribute to the GTP site; these read NAGKST, SHMPGTT, DTAG, and SAR. S246 and T267 together coordinate Mg(2+). A (6S)-5-formyl-5,6,7,8-tetrahydrofolate-binding site is contributed by K475.

This sequence belongs to the TRAFAC class TrmE-Era-EngA-EngB-Septin-like GTPase superfamily. TrmE GTPase family. As to quaternary structure, homodimer. Heterotetramer of two MnmE and two MnmG subunits. Requires K(+) as cofactor.

Its subcellular location is the cytoplasm. In terms of biological role, exhibits a very high intrinsic GTPase hydrolysis rate. Involved in the addition of a carboxymethylaminomethyl (cmnm) group at the wobble position (U34) of certain tRNAs, forming tRNA-cmnm(5)s(2)U34. This is tRNA modification GTPase MnmE from Chlorobium phaeobacteroides (strain DSM 266 / SMG 266 / 2430).